The primary structure comprises 371 residues: Flagellar P-ring protein (371 aa).

Positions 1–24 are cleaved as a signal peptide; it reads MSIRVLLFSIFTGFLLAAAGPALA. Residues 301-321 show a composition bias toward polar residues; the sequence is PQPFSSGTTATQPQTDISAQK. The segment at 301–322 is disordered; it reads PQPFSSGTTATQPQTDISAQKT.

It belongs to the FlgI family. In terms of assembly, the basal body constitutes a major portion of the flagellar organelle and consists of four rings (L,P,S, and M) mounted on a central rod.

The protein localises to the periplasm. The protein resides in the bacterial flagellum basal body. Functionally, assembles around the rod to form the L-ring and probably protects the motor/basal body from shearing forces during rotation. This is Flagellar P-ring protein from Allorhizobium ampelinum (strain ATCC BAA-846 / DSM 112012 / S4) (Agrobacterium vitis (strain S4)).